Here is a 178-residue protein sequence, read N- to C-terminus: NADH-quinone oxidoreductase subunit B 1 (178 aa).

Positions 39, 40, 104, and 135 each coordinate [4Fe-4S] cluster.

Belongs to the complex I 20 kDa subunit family. In terms of assembly, NDH-1 is composed of 14 different subunits. Subunits NuoB, C, D, E, F, and G constitute the peripheral sector of the complex. It depends on [4Fe-4S] cluster as a cofactor.

It is found in the cell inner membrane. It catalyses the reaction a quinone + NADH + 5 H(+)(in) = a quinol + NAD(+) + 4 H(+)(out). Its function is as follows. NDH-1 shuttles electrons from NADH, via FMN and iron-sulfur (Fe-S) centers, to quinones in the respiratory chain. The immediate electron acceptor for the enzyme in this species is believed to be a menaquinone. Couples the redox reaction to proton translocation (for every two electrons transferred, four hydrogen ions are translocated across the cytoplasmic membrane), and thus conserves the redox energy in a proton gradient. The polypeptide is NADH-quinone oxidoreductase subunit B 1 (Cytophaga hutchinsonii (strain ATCC 33406 / DSM 1761 / CIP 103989 / NBRC 15051 / NCIMB 9469 / D465)).